We begin with the raw amino-acid sequence, 271 residues long: Aquaporin-1 (271 aa).

The Cytoplasmic segment spans residues 1-11 (MASEFKKKLFW). A helical membrane pass occupies residues 12–29 (RAVVAEFLAMILFIFISI). Over 30 to 48 (GSALGFHYPIKSNQTTGAV) the chain is Extracellular. Asn-42 carries N-linked (GlcNAc...) asparagine glycosylation. Residues 49-67 (QDNVKVSLAFGLSIATLAQ) form a helical membrane-spanning segment. Residues 68-70 (SVG) are Cytoplasmic-facing. An intramembrane segment occupies 71-84 (HISGAHLNPAVTLG). An NPA 1 motif is present at residues 78–80 (NPA). Over 85-92 (LLLSCQIS) the chain is Cytoplasmic. Residues 93–111 (VLRAIMYIIAQCVGAIVAT) form a helical membrane-spanning segment. Residues 112–135 (AILSGITSSLPDNSLGLNALAPGV) lie on the Extracellular side of the membrane. The helical transmembrane segment at 136-155 (NSGQGLGIEIIGTLQLVLCV) threads the bilayer. The Cytoplasmic portion of the chain corresponds to 156–165 (LATTDRRRRD). A helical membrane pass occupies residues 166–183 (LGGSGPLAIGFSVALGHL). The Extracellular portion of the chain corresponds to 184–188 (LAIDY). An intramembrane segment occupies 189-201 (TGCGINPARSFGS). An NPA 2 motif is present at residues 194–196 (NPA). At 202-208 (SVITHNF) the chain is on the extracellular side. Residues 209–226 (QDHWIFWVGPFIGAALAV) form a helical membrane-spanning segment. Topologically, residues 227-271 (LIYDFILAPRSSDLTDRVKVWTSGQVEEYDLDADDINSRVEMKPK) are cytoplasmic. Ser-249 bears the Phosphoserine mark. Tyr-255 is modified (phosphotyrosine). Phosphoserine is present on Ser-264.

The protein belongs to the MIP/aquaporin (TC 1.A.8) family. As to quaternary structure, homotetramer; each monomer provides an independent water pore. Component of the ankyrin-1 complex in the erythrocyte, composed of ANK1, RHCE, RHAG, SLC4A1, EPB42, GYPA, GYPB and AQP1. Interacts with EPHB2; involved in endolymph production in the inner ear. Identified in a complex with STOM. Interacts (via the N-terminal) with ANK1 (via ANK 1-5 repeats). Interacts (via the C-terminal) with EPB42.

It localises to the cell membrane. It carries out the reaction H2O(in) = H2O(out). The enzyme catalyses nitric oxide(out) = nitric oxide(in). It catalyses the reaction CO2(out) = CO2(in). The catalysed reaction is glycerol(in) = glycerol(out). It carries out the reaction H2O2(out) = H2O2(in). The enzyme catalyses K(+)(in) = K(+)(out). It catalyses the reaction Na(+)(in) = Na(+)(out). Its function is as follows. Forms a water channel that facilitates the transport of water across cell membranes, playing a crucial role in water homeostasis in various tissues. Could also be permeable to small solutes including hydrogen peroxide, glycerol and gases such as amonnia (NH3), nitric oxide (NO) and carbon dioxide (CO2). Recruited to the ankyrin-1 complex, a multiprotein complex of the erythrocyte membrane, it could be part of a CO2 metabolon, linking facilitated diffusion of CO2 across the membrane, anion exchange of Cl(-)/HCO3(-) and interconversion of dissolved CO2 and carbonic acid in the cytosol. In vitro, it shows non-selective gated cation channel activity and may be permeable to cations like K(+) and Na(+) in vivo. In Bos taurus (Bovine), this protein is Aquaporin-1.